Consider the following 449-residue polypeptide: Protein king tubby (449 aa).

The segment at Ser-123–Val-197 is disordered. Residues Ala-124–Asp-145 show a composition bias toward polar residues. Phosphoserine is present on Ser-142. Low complexity predominate over residues Asn-154–Ala-166. Residues Asn-183–Glu-192 show a composition bias toward gly residues.

Belongs to the TUB family.

Its subcellular location is the cytoplasm. It is found in the nucleus. It localises to the cell projection. The protein resides in the cilium membrane. The protein localises to the rhabdomere. This is Protein king tubby from Drosophila ananassae (Fruit fly).